Here is a 638-residue protein sequence, read N- to C-terminus: MGNGMCSRRQKRIFQALACLAVAIGFVYGAMLNYHLQNDLKKAEAVALKYQQHHESMSAQLQVVYEHRSRLEKSLQKERLEHKKAKEDFLVYKLEAQETLNKGRQDSNNRYNALGVQHEMLKSQHEELRKQHNELQGEHQKLGEDLTRTYSNHKEKYLLLQQEKEQEHSKLKESIYNLREENKQLRKAHQDVHLQLQDVKSQVEEYVQLKKALNKMSSLRQPEKDTVPIGRNNSPTIAPTQEHATEQELMTNVQTRQVVDHDIIIRSSTAANDEAVHLNRVKTNLDKPDEDTVPLPEAEAATEHPVEVEEEHKKELEEEEMEQVGKPERLVEEQDQVQEEQEQHKPEEDDALEGNNEEQKEEETNNMQGNKHTERDPTLKPHSKYKSAYEEQLEQQQLAARQMEEARHLKEQQDLLHQQRLKEHILRQQQLHENDIELQRQNKYKEEQLAEKLRKQAEYENVDHDIVQGEEEQPIQQEEAAYERDNHQDEAEDVDAANNANEEQALDQEAESREGQEKAAAEDVNPADDPNNQGEDEFEEAEQEREENLPDENEAQRQQQEHPEVQEHLAMAGNPDQQEDNIDQQYQEEEEEERQIGAEREPDAQQEENKERNEENYEEEEEEEDGAAGVKNKRRAEM.

The Cytoplasmic portion of the chain corresponds to 1-12; that stretch reads MGNGMCSRRQKR. Residues 13–33 form a helical; Signal-anchor for type II membrane protein membrane-spanning segment; that stretch reads IFQALACLAVAIGFVYGAMLN. Topologically, residues 34-638 are lumenal; it reads YHLQNDLKKA…GVKNKRRAEM (605 aa). 2 golgi targeting regions span residues 38 to 107 and 176 to 220; these read NDLK…RQDS and YNLR…SSLR. The stretch at 66 to 216 forms a coiled coil; it reads EHRSRLEKSL…VQLKKALNKM (151 aa). Residues 80–175 form an endosome targeting region; that stretch reads LEHKKAKEDF…QEHSKLKESI (96 aa). Disordered stretches follow at residues 217-245, 280-415, and 455-638; these read SSLR…EHAT, RVKT…QQDL, and KQAE…RAEM. 2 stretches are compositionally biased toward basic and acidic residues: residues 301 to 316 and 323 to 332; these read ATEH…KKEL and QVGKPERLVE. Positions 348–361 are enriched in acidic residues; that stretch reads EDDALEGNNEEQKE. 3 stretches are compositionally biased toward basic and acidic residues: residues 402 to 414, 455 to 467, and 510 to 521; these read QMEE…EQQD, KQAE…HDIV, and AESREGQEKAAA. Acidic residues-rich tracts occupy residues 534–553 and 577–593; these read GEDE…PDEN and QQED…EEEE. Basic and acidic residues predominate over residues 594–615; that stretch reads RQIGAEREPDAQQEENKERNEE. The span at 616-626 shows a compositional bias: acidic residues; it reads NYEEEEEEEDG.

This sequence belongs to the GOLIM4 family.

The protein resides in the golgi apparatus. It is found in the golgi stack membrane. It localises to the endosome membrane. Its function is as follows. May play a role in endosome to Golgi protein trafficking. The chain is Golgi integral membrane protein 4 (golim4) from Xenopus tropicalis (Western clawed frog).